The sequence spans 369 residues: mRNA cap guanine-N(7) methyltransferase 1 (369 aa).

The interval 1–55 (MNKRPRDEPSSSFASAPKRQYGAGGGGYGGHGYSEERSSARRVADHYSARSNQTL) is disordered. The segment covering 22 to 32 (GAGGGGYGGHG) has biased composition (gly residues). The span at 33 to 48 (YSEERSSARRVADHYS) shows a compositional bias: basic and acidic residues. Residues 61 to 340 (SPIIHLKKLN…LYLAFVLRKR (280 aa)) form the mRNA cap 0 methyltransferase domain. 70 to 71 (NN) serves as a coordination point for mRNA. Residues Lys-74, Ala-92, Asp-114, 149–150 (DC), and 171–173 (QFA) contribute to the S-adenosyl-L-methionine site.

It belongs to the class I-like SAM-binding methyltransferase superfamily. mRNA cap 0 methyltransferase family.

It is found in the nucleus. The catalysed reaction is a 5'-end (5'-triphosphoguanosine)-ribonucleoside in mRNA + S-adenosyl-L-methionine = a 5'-end (N(7)-methyl 5'-triphosphoguanosine)-ribonucleoside in mRNA + S-adenosyl-L-homocysteine. Its function is as follows. mRNA-capping methyltransferase that methylates the N7 position of the added guanosine to the 5'-cap structure of mRNAs. Binds RNA containing 5'-terminal GpppC. This is mRNA cap guanine-N(7) methyltransferase 1 from Oryza sativa subsp. japonica (Rice).